Here is an 838-residue protein sequence, read N- to C-terminus: Phosphatidylethanolamine N-methyltransferase 1 (838 aa).

At 1 to 48 the chain is on the lumenal side; sequence MATEIITEKKEIVARTRSSGITFNPPVTHDMVRSLFDPTIKKSFLECC. A helical transmembrane segment spans residues 49-69; that stretch reads ITLTILANFVLCYYLINWFGL. The Cytoplasmic segment spans residues 70–73; it reads SQAK. A helical transmembrane segment spans residues 74-94; it reads LIFLIQYVYWRLAYNLGIGII. Topologically, residues 95 to 157 are lumenal; it reads LHYQSHYESL…ELNCWLLFRQ (63 aa). Residues 158-178 form a helical membrane-spanning segment; it reads FVDLILMQDFTTYIIYVYLSL. Topologically, residues 179-184 are cytoplasmic; that stretch reads PTDVSS. A helical membrane pass occupies residues 185 to 205; the sequence is LINWKSLIGIAMILFNIWVKI. Residues 206-236 are Lumenal-facing; the sequence is DAHRVVKDYAWYWGDFFFLQDAELTFDGVFN. Residues 237-257 form a helical membrane-spanning segment; it reads ISPHPMYSIGYLGYYGLSLIC. Topologically, residues 258–261 are cytoplasmic; that stretch reads GDYR. A helical membrane pass occupies residues 262–282; sequence VLLVSVGGHFLQFLFLKYVES. Residues 283–328 lie on the Lumenal side of the membrane; it reads PHIERTYGSDSPSNSTQHQIDDLIAKENYDYSRPLINTGILFENFQ. Residues 329-349 form a helical membrane-spanning segment; sequence FLRFSDYFTVSTILVLFSWFF. At 350-356 the chain is on the cytoplasmic side; that stretch reads TSKPSNN. The helical transmembrane segment at 357 to 377 threads the bilayer; sequence FLFVLTLLTKLTTWLLTSWIL. Topologically, residues 378-403 are lumenal; it reads FQQSNRKWFTRLFLKNGYTQIYSYQQ. A helical transmembrane segment spans residues 404-424; that stretch reads WQFLYNYSLIVTNTLLFLHTL. The Cytoplasmic segment spans residues 425 to 435; that stretch reads SELYSIQSSDG. Residues 436 to 456 traverse the membrane as a helical segment; it reads LNNSHVIFGLLLCAIQIWCNV. Residues 457–517 are Lumenal-facing; sequence ETRDAISDFG…VLMTNFSKTN (61 aa). Residues 518 to 538 traverse the membrane as a helical segment; it reads VTLAVLWTVTNLIFVKLIEEP. Topologically, residues 539–838 are cytoplasmic; it reads HVSKVYGNGT…DIKEVLDSLN (300 aa).

Belongs to the class VI-like SAM-binding methyltransferase superfamily. CHO2 family.

It is found in the endoplasmic reticulum membrane. The catalysed reaction is a 1,2-diacyl-sn-glycero-3-phosphoethanolamine + S-adenosyl-L-methionine = a 1,2-diacyl-sn-glycero-3-phospho-N-methylethanolamine + S-adenosyl-L-homocysteine + H(+). The protein operates within phospholipid metabolism; phosphatidylcholine biosynthesis. Catalyzes the first step of the methylation pathway of phosphatidylcholine biosynthesis, the SAM-dependent methylation of phosphatidylethanolamine (PE) to phosphatidylmonomethylethanolamine (PMME). This Vanderwaltozyma polyspora (strain ATCC 22028 / DSM 70294 / BCRC 21397 / CBS 2163 / NBRC 10782 / NRRL Y-8283 / UCD 57-17) (Kluyveromyces polysporus) protein is Phosphatidylethanolamine N-methyltransferase 1 (CHO2-1).